Consider the following 166-residue polypeptide: uncharacterized protein (166 aa).

Over residues 73-88 (SKLNNNNNSNNNNKMA) the composition is skewed to low complexity. Disordered stretches follow at residues 73-101 (SKLNNNNNSNNNNKMAVDNKDNKDNEKDK) and 126-166 (PQSS…EFNN). Residues 89–101 (VDNKDNKDNEKDK) show a composition bias toward basic and acidic residues. A compositionally biased stretch (low complexity) spans 134–154 (SPTHKSPSSSPKTISPVKVSP). Over residues 155 to 166 (TSSPIKNPEFNN) the composition is skewed to polar residues.

This is an uncharacterized protein from Dictyostelium discoideum (Social amoeba).